Consider the following 1265-residue polypeptide: Dynactin subunit 1 (1265 aa).

One can recognise a CAP-Gly domain in the interval 27-69 (GMTSFAVGKWVGVVLDEPKGKNSGSIKGQQYFQCDENCGMFVR). Residues 81-179 (GSRRSIEDVS…GNGAASHASS (99 aa)) are disordered. 5 positions are modified to phosphoserine: Ser-85, Ser-110, Ser-114, Ser-117, and Ser-121. Low complexity-rich tracts occupy residues 103–138 (RLSS…SSSS) and 161–177 (AEGA…ASHA). Ser-183 is modified (phosphoserine). 3 coiled-coil regions span residues 213 to 570 (NSGA…ESLQ), 812 to 836 (LIQF…RLPS), and 967 to 1084 (QRAQ…NSTT). Residues 1082–1106 (STTGKVQPGSESHSPHNISLSGNTS) are disordered. Phosphoserine is present on Ser-1117. Residues 1128–1160 (EEVELLKNAFNQERNQRLRLQAQDMRAKLSQFE) are a coiled coil.

Belongs to the dynactin 150 kDa subunit family. As to quaternary structure, monomer and homodimer. Subunit of dynactin, a multiprotein complex part of a tripartite complex with dynein and a adapter, such as BICDL1, BICD2 or HOOK3. The dynactin complex is built around ACTR1A/ACTB filament and consists of an actin-related filament composed of a shoulder domain, a pointed end and a barbed end. Its length is defined by its flexible shoulder domain. The soulder is composed of 2 DCTN1 subunits, 4 DCTN2 and 2 DCTN3. DCTN1/p150(glued) binds directly to microtubules and to cytoplasmic dynein.

The protein localises to the cytoplasm. The protein resides in the cytoskeleton. Part of the dynactin complex that activates the molecular motor dynein for ultra-processive transport along microtubules. Plays a key role in dynein-mediated retrograde transport of vesicles and organelles along microtubules by recruiting and tethering dynein to microtubules. Binds to both dynein and microtubules providing a link between specific cargos, microtubules and dynein. Essential for targeting dynein to microtubule plus ends, recruiting dynein to membranous cargos and enhancing dynein processivity (the ability to move along a microtubule for a long distance without falling off the track). Can also act as a brake to slow the dynein motor during motility along the microtubule. Can regulate microtubule stability by promoting microtubule formation, nucleation and polymerization and by inhibiting microtubule catastrophe in neurons. Inhibits microtubule catastrophe by binding both to microtubules and to tubulin, leading to enhanced microtubule stability along the axon. Plays a role in metaphase spindle orientation. Plays a role in centriole cohesion and subdistal appendage organization and function. Its recruitment to the centriole in a KIF3A-dependent manner is essential for the maintenance of centriole cohesion and the formation of subdistal appendage. Also required for microtubule anchoring at the mother centriole. Plays a role in primary cilia formation. The polypeptide is Dynactin subunit 1 (Drosophila melanogaster (Fruit fly)).